Consider the following 223-residue polypeptide: DNA mismatch repair protein MutH (223 aa).

The protein belongs to the MutH family.

It is found in the cytoplasm. Functionally, sequence-specific endonuclease that cleaves unmethylated GATC sequences. It is involved in DNA mismatch repair. The chain is DNA mismatch repair protein MutH from Shewanella sp. (strain ANA-3).